The chain runs to 319 residues: ATP-dependent 6-phosphofructokinase (319 aa).

ATP is bound by residues G10, 71–72 (RS), and 101–104 (GDGS). D102 serves as a coordination point for Mg(2+). 125–127 (TID) serves as a coordination point for substrate. The active-site Proton acceptor is the D127. R154 provides a ligand contact to ADP. Residues R162 and 169-171 (MGR) each bind substrate. 185–187 (GAE) provides a ligand contact to ADP. Residues E223, R244, and 250–253 (HVQR) each bind substrate.

The protein belongs to the phosphofructokinase type A (PFKA) family. ATP-dependent PFK group I subfamily. Prokaryotic clade 'B1' sub-subfamily. As to quaternary structure, homotetramer. Mg(2+) is required as a cofactor.

The protein resides in the cytoplasm. It catalyses the reaction beta-D-fructose 6-phosphate + ATP = beta-D-fructose 1,6-bisphosphate + ADP + H(+). Its pathway is carbohydrate degradation; glycolysis; D-glyceraldehyde 3-phosphate and glycerone phosphate from D-glucose: step 3/4. Allosterically activated by ADP and other diphosphonucleosides, and allosterically inhibited by phosphoenolpyruvate. In terms of biological role, catalyzes the phosphorylation of D-fructose 6-phosphate to fructose 1,6-bisphosphate by ATP, the first committing step of glycolysis. In Wolinella succinogenes (strain ATCC 29543 / DSM 1740 / CCUG 13145 / JCM 31913 / LMG 7466 / NCTC 11488 / FDC 602W) (Vibrio succinogenes), this protein is ATP-dependent 6-phosphofructokinase.